The chain runs to 132 residues: Dinoflagellate viral nucleoprotein 5 (132 aa).

Basic residues predominate over residues 1–44 (MAAMKKAMKVKKSAKKSAKKSGKKGGMKKKAKRVSKVARGKRAK). The disordered stretch occupies residues 1 to 84 (MAAMKKAMKV…KKQSEHGKKI (84 aa)). The span at 57–66 (GGLTKNSLVK) shows a compositional bias: polar residues.

In terms of processing, phosphorylated.

The protein localises to the nucleus. Its subcellular location is the chromosome. Functionally, DNA-binding protein, which similarly to histones, may compact DNA into chromatin. The polypeptide is Dinoflagellate viral nucleoprotein 5 (Hematodinium sp).